We begin with the raw amino-acid sequence, 131 residues long: Torsin-1A-interacting protein 2, isoform IFRG15 (131 aa).

This chain is Torsin-1A-interacting protein 2, isoform IFRG15 (TOR1AIP2), found in Homo sapiens (Human).